The chain runs to 295 residues: Histone deacetylase HDT1 (295 aa).

The segment at 105-271 (SDFSDSSEED…TPNSAGQLSC (167 aa)) is disordered. Residues 109 to 118 (DSSEEDEELA) show a composition bias toward acidic residues. Positions 123–135 (DNGKPELKAEGAK) are enriched in basic and acidic residues. Positions 159–199 (EDDDSDDESDDDLAGEDESGSSDEMDDDSNSEEESDGDDEE) are enriched in acidic residues. Residues 200-213 (TPAKKVDQGKKRPN) are compositionally biased toward basic and acidic residues. Positions 254–271 (TPNSTKGQTPNSAGQLSC) are enriched in polar residues. A C2H2-type zinc finger spans residues 269–292 (LSCASCKKSFTNEAGLQQHKKAKH).

Belongs to the histone deacetylase HD2 family.

It is found in the nucleus. The protein localises to the nucleolus. Mediates the deacetylation of lysine residues on the N-terminal part of the core histones (H2A, H2B, H3 and H4). Histone deacetylation gives a tag for epigenetic repression and plays an important role in transcriptional regulation, cell cycle progression and developmental events. In Glycine max (Soybean), this protein is Histone deacetylase HDT1 (HDT1).